Reading from the N-terminus, the 210-residue chain is 3-hexulose-6-phosphate synthase (210 aa).

It belongs to the HPS/KGPDC family. HPS subfamily.

It carries out the reaction D-ribulose 5-phosphate + formaldehyde = D-arabino-hex-3-ulose 6-phosphate. It participates in one-carbon metabolism; formaldehyde assimilation via RuMP pathway; D-fructose 6-phosphate from D-ribulose 5-phosphate and formaldehyde: step 1/2. Catalyzes the condensation of ribulose 5-phosphate with formaldehyde to form 3-hexulose 6-phosphate. The polypeptide is 3-hexulose-6-phosphate synthase (Staphylococcus haemolyticus (strain JCSC1435)).